A 401-amino-acid chain; its full sequence is Acetate kinase (401 aa).

A Mg(2+)-binding site is contributed by asparagine 7. Residue lysine 14 participates in ATP binding. Arginine 91 lines the substrate pocket. Residue aspartate 148 is the Proton donor/acceptor of the active site. ATP is bound by residues 208–212 (HLGNG), 283–285 (DFR), and 332–336 (GVGEN). Residue glutamate 385 participates in Mg(2+) binding.

The protein belongs to the acetokinase family. As to quaternary structure, homodimer. Mg(2+) serves as cofactor. It depends on Mn(2+) as a cofactor.

It localises to the cytoplasm. It carries out the reaction acetate + ATP = acetyl phosphate + ADP. Its pathway is metabolic intermediate biosynthesis; acetyl-CoA biosynthesis; acetyl-CoA from acetate: step 1/2. Catalyzes the formation of acetyl phosphate from acetate and ATP. Can also catalyze the reverse reaction. The polypeptide is Acetate kinase (Caldanaerobacter subterraneus subsp. tengcongensis (strain DSM 15242 / JCM 11007 / NBRC 100824 / MB4) (Thermoanaerobacter tengcongensis)).